Here is a 282-residue protein sequence, read N- to C-terminus: NADPH-dependent 7-cyano-7-deazaguanine reductase (282 aa).

88–90 (IES) is a binding site for substrate. An NADPH-binding site is contributed by 90 to 91 (SK). Residue cysteine 190 is the Thioimide intermediate of the active site. The Proton donor role is filled by aspartate 197. 229–230 (HE) contacts substrate. NADPH is bound at residue 258 to 259 (RG).

The protein belongs to the GTP cyclohydrolase I family. QueF type 2 subfamily. As to quaternary structure, homodimer.

The protein resides in the cytoplasm. It carries out the reaction 7-aminomethyl-7-carbaguanine + 2 NADP(+) = 7-cyano-7-deazaguanine + 2 NADPH + 3 H(+). It participates in tRNA modification; tRNA-queuosine biosynthesis. Functionally, catalyzes the NADPH-dependent reduction of 7-cyano-7-deazaguanine (preQ0) to 7-aminomethyl-7-deazaguanine (preQ1). The polypeptide is NADPH-dependent 7-cyano-7-deazaguanine reductase (Salmonella arizonae (strain ATCC BAA-731 / CDC346-86 / RSK2980)).